We begin with the raw amino-acid sequence, 398 residues long: Phosphoglycerate kinase (398 aa).

Residues 23 to 25 (DLN), R38, 61 to 64 (HFGR), R119, and R152 contribute to the substrate site. ATP contacts are provided by residues K202, E324, and 354–357 (GGDT).

It belongs to the phosphoglycerate kinase family. As to quaternary structure, monomer.

The protein resides in the cytoplasm. The catalysed reaction is (2R)-3-phosphoglycerate + ATP = (2R)-3-phospho-glyceroyl phosphate + ADP. Its pathway is carbohydrate degradation; glycolysis; pyruvate from D-glyceraldehyde 3-phosphate: step 2/5. The polypeptide is Phosphoglycerate kinase (Rhodopseudomonas palustris (strain ATCC BAA-98 / CGA009)).